A 144-amino-acid polypeptide reads, in one-letter code: Large ribosomal subunit protein uL16 (144 aa).

Positions Met1 to Arg14 are enriched in basic residues. Residues Met1–Asn22 are disordered.

Belongs to the universal ribosomal protein uL16 family. Part of the 50S ribosomal subunit.

Its function is as follows. Binds 23S rRNA and is also seen to make contacts with the A and possibly P site tRNAs. The polypeptide is Large ribosomal subunit protein uL16 (Syntrophomonas wolfei subsp. wolfei (strain DSM 2245B / Goettingen)).